The following is a 453-amino-acid chain: MNRRIFGLENEYGVTCTFRGQRRLTPDEVARYLFRRVVSWGRSSNVFLRNGARLYLDVGSHPEYATGECDSVTDLIAHDKAGERILEGLLVDAQKRLHDEGIFGDVYLFKNNTDSAGNSYGCHENYLVSRHGDFAKLADVLIPFLVTRQLICGAGKVLQTPRGAVYSVSQRAEHIWEGVSSATTRSRPIINTRDEPHADAERFRRLHVIVGDSNMSETTMLLKVASTDLVLRMIEAGIVMRDLTLDNPIRAIREISHDMTGRREVRLANGREASALDIQGEYLSKARDFVDRRELGTPAVERALSLWERTLKAIESGDLSGIEREIDWVIKYRLIERYRAQNNLGLASPRVAQLDLAYHDIHRPRGLYYLLERKGAVTRVVDDLRVFEAKSVPPQTTRARLRGEFIKRAQERRRDFTVDWVHLKLNDQAQRTVLCKDPFKSHDERVEKLIASM.

Residue Glu9 participates in Mg(2+) binding. An ATP-binding site is contributed by Arg53. Tyr55 serves as a coordination point for Mg(2+). Asp57 (proton acceptor) is an active-site residue. Glu63 is a Mg(2+) binding site. ATP is bound by residues Thr66 and Trp420.

The protein belongs to the Pup ligase/Pup deamidase family. Pup-conjugating enzyme subfamily.

It carries out the reaction ATP + [prokaryotic ubiquitin-like protein]-L-glutamate + [protein]-L-lysine = ADP + phosphate + N(6)-([prokaryotic ubiquitin-like protein]-gamma-L-glutamyl)-[protein]-L-lysine.. It participates in protein degradation; proteasomal Pup-dependent pathway. The protein operates within protein modification; protein pupylation. In terms of biological role, catalyzes the covalent attachment of the prokaryotic ubiquitin-like protein modifier Pup to the proteasomal substrate proteins, thereby targeting them for proteasomal degradation. This tagging system is termed pupylation. The ligation reaction involves the side-chain carboxylate of the C-terminal glutamate of Pup and the side-chain amino group of a substrate lysine. In Kribbella flavida (strain DSM 17836 / JCM 10339 / NBRC 14399), this protein is Pup--protein ligase.